The sequence spans 563 residues: Solute carrier family 22 member 6 (563 aa).

The Cytoplasmic portion of the chain corresponds to 1-9 (MAFNDLLQQ). Residues 10 to 30 (VGGVGRFQQIQVTLVVLPLLL) form a helical membrane-spanning segment. The Extracellular portion of the chain corresponds to 31–135 (MASHNTLQNF…LVCSHRALRQ (105 aa)). N-linked (GlcNAc...) asparagine glycans are attached at residues N39, N56, N92, N97, and N113. The chain crosses the membrane as a helical span at residues 136–156 (LAQSLYMVGVLLGAMVFGYLA). Over 157–164 (DRLGRRKV) the chain is Cytoplasmic. Residues 165 to 187 (LILNYLQTAVSGTCAAFAPNFPI) traverse the membrane as a helical segment. The Extracellular segment spans residues 188–190 (YCA). Residues 191-213 (FRLLSGMALAGISLNCMTLNVEW) form a helical membrane-spanning segment. At 214-224 (MPIHTRACVGT) the chain is on the cytoplasmic side. The chain crosses the membrane as a helical span at residues 225-245 (LIGYVYSLGQFLLAGVAYAVP). Residues 246–248 (HWR) are Extracellular-facing. The helical transmembrane segment at 249 to 269 (HLQLLVSAPFFAFFIYSWFFI) threads the bilayer. Topologically, residues 270-337 (ESARWHSSSG…ELLRCPTLRH (68 aa)) are cytoplasmic. A helical transmembrane segment spans residues 338 to 358 (LFLCLSMLWFATSFAYYGLVM). Residues 359–368 (DLQGFGVSIY) are Extracellular-facing. The helical transmembrane segment at 369–389 (LIQVIFGAVDLPAKLVGFLVI) threads the bilayer. At 390 to 395 (NSLGRR) the chain is on the cytoplasmic side. Residues 396–416 (PAQMAALLLAGICILLNGVIP) form a helical membrane-spanning segment. Residues 417–425 (QDQSIVRTS) are Extracellular-facing. The chain crosses the membrane as a helical span at residues 426 to 446 (LAVLGKGCLAASFNCIFLYTG). The Cytoplasmic portion of the chain corresponds to 447–455 (ELYPTMIRQ). Residues 456-475 (TGMGMGSTMARVGSIVSPLV) form a helical membrane-spanning segment. The Extracellular segment spans residues 476–484 (SMTAELYPS). A helical transmembrane segment spans residues 485–505 (MPLFIYGAVPVAASAVTVLLP). Residues 506-563 (ETLGQPLPDTVQDLESRWAPTQKEAGIYPRKGKQTRQQQEHQKYMVPLQASAQEKNGL) are Cytoplasmic-facing. The disordered stretch occupies residues 525–563 (PTQKEAGIYPRKGKQTRQQQEHQKYMVPLQASAQEKNGL).

This sequence belongs to the major facilitator (TC 2.A.1) superfamily. Organic cation transporter (TC 2.A.1.19) family. Glycosylated. Glycosylation at Asn-113 may occur at a secondary level. Glycosylation is necessary for proper targeting of the transporter to the plasma membrane. Strongly expressed in kidney. Expressed at lower level in liver, skeletal muscle, brain and placenta. In kidney, found at the basolateral membrane of the proximal tubule. In testis, primarily localized to the basal membrane of Sertoli cells and weakly expressed in Leydig cells and vascular endothelial cells.

The protein resides in the basolateral cell membrane. It is found in the basal cell membrane. It carries out the reaction (6R)-L-erythro-5,6,7,8-tetrahydrobiopterin(out) + a dicarboxylate(in) = (6R)-L-erythro-5,6,7,8-tetrahydrobiopterin(in) + a dicarboxylate(out). It catalyses the reaction L-erythro-7,8-dihydrobiopterin(out) + a dicarboxylate(in) = L-erythro-7,8-dihydrobiopterin(in) + a dicarboxylate(out). The enzyme catalyses L-sepiapterin(out) + a dicarboxylate(in) = L-sepiapterin(in) + a dicarboxylate(out). The catalysed reaction is prostaglandin F2alpha(out) + a dicarboxylate(in) = prostaglandin F2alpha(in) + a dicarboxylate(out). It carries out the reaction prostaglandin E2(out) + a dicarboxylate(in) = prostaglandin E2(in) + a dicarboxylate(out). It catalyses the reaction 3',5'-cyclic AMP(out) + a dicarboxylate(in) = 3',5'-cyclic AMP(in) + a dicarboxylate(out). The enzyme catalyses 3',5'-cyclic GMP(out) + a dicarboxylate(in) = 3',5'-cyclic GMP(in) + a dicarboxylate(out). The catalysed reaction is urate(out) + a dicarboxylate(in) = urate(in) + a dicarboxylate(out). It carries out the reaction kynurenate(out) + glutarate(in) = kynurenate(in) + glutarate(out). It catalyses the reaction (indol-3-yl)acetate(out) + a dicarboxylate(in) = (indol-3-yl)acetate(in) + a dicarboxylate(out). The enzyme catalyses indoxyl sulfate(out) + a dicarboxylate(in) = indoxyl sulfate(in) + a dicarboxylate(out). The catalysed reaction is N-benzoylglycine(out) + a dicarboxylate(in) = N-benzoylglycine(in) + a dicarboxylate(out). It carries out the reaction 3-carboxy-4-methyl-5-propyl-2-furanpropanoate(out) + a dicarboxylate(in) = 3-carboxy-4-methyl-5-propyl-2-furanpropanoate(in) + a dicarboxylate(out). Its function is as follows. Secondary active transporter that functions as a Na(+)-independent organic anion (OA)/dicarboxylate antiporter where the uptake of one molecule of OA into the cell is coupled with an efflux of one molecule of intracellular dicarboxylate such as 2-oxoglutarate or glutarate. Mediates the uptake of OA across the basolateral side of proximal tubule epithelial cells, thereby contributing to the renal elimination of endogenous OA from the systemic circulation into the urine. Functions as a biopterin transporters involved in the uptake and the secretion of coenzymes tetrahydrobiopterin (BH4), dihydrobiopterin (BH2) and sepiapterin to urine, thereby determining baseline levels of blood biopterins. Transports prostaglandin E2 (PGE2) and prostaglandin F2-alpha (PGF2-alpha) and may contribute to their renal excretion. Also mediates the uptake of cyclic nucleotides such as cAMP and cGMP. Involved in the transport of neuroactive tryptophan metabolites kynurenate (KYNA) and xanthurenate (XA) and may contribute to their secretion from the brain. May transport glutamate. Also involved in the disposition of uremic toxins and potentially toxic xenobiotics by the renal organic anion secretory pathway, helping reduce their undesired toxicological effects on the body. Uremic toxins include the indoxyl sulfate (IS), hippurate/N-benzoylglycine (HA), indole acetate (IA), 3-carboxy-4- methyl-5-propyl-2-furanpropionate (CMPF) and urate. Xenobiotics include the mycotoxin ochratoxin (OTA). May also contribute to the transport of organic compounds in testes across the blood-testis-barrier. This chain is Solute carrier family 22 member 6, found in Homo sapiens (Human).